The chain runs to 274 residues: 4-diphosphocytidyl-2-C-methyl-D-erythritol kinase (274 aa).

The active site involves K8. 94 to 104 (PSGAGLGGGSA) provides a ligand contact to ATP. D136 is a catalytic residue.

It belongs to the GHMP kinase family. IspE subfamily.

The catalysed reaction is 4-CDP-2-C-methyl-D-erythritol + ATP = 4-CDP-2-C-methyl-D-erythritol 2-phosphate + ADP + H(+). Its pathway is isoprenoid biosynthesis; isopentenyl diphosphate biosynthesis via DXP pathway; isopentenyl diphosphate from 1-deoxy-D-xylulose 5-phosphate: step 3/6. In terms of biological role, catalyzes the phosphorylation of the position 2 hydroxy group of 4-diphosphocytidyl-2C-methyl-D-erythritol. The polypeptide is 4-diphosphocytidyl-2-C-methyl-D-erythritol kinase (Bacteroides fragilis (strain YCH46)).